A 145-amino-acid chain; its full sequence is D-aminoacyl-tRNA deacylase (145 aa).

Positions 137–138 (GP) match the Gly-cisPro motif, important for rejection of L-amino acids motif.

It belongs to the DTD family. In terms of assembly, homodimer.

The protein localises to the cytoplasm. The catalysed reaction is glycyl-tRNA(Ala) + H2O = tRNA(Ala) + glycine + H(+). It catalyses the reaction a D-aminoacyl-tRNA + H2O = a tRNA + a D-alpha-amino acid + H(+). Functionally, an aminoacyl-tRNA editing enzyme that deacylates mischarged D-aminoacyl-tRNAs. Also deacylates mischarged glycyl-tRNA(Ala), protecting cells against glycine mischarging by AlaRS. Acts via tRNA-based rather than protein-based catalysis; rejects L-amino acids rather than detecting D-amino acids in the active site. By recycling D-aminoacyl-tRNA to D-amino acids and free tRNA molecules, this enzyme counteracts the toxicity associated with the formation of D-aminoacyl-tRNA entities in vivo and helps enforce protein L-homochirality. The sequence is that of D-aminoacyl-tRNA deacylase from Shewanella frigidimarina (strain NCIMB 400).